The primary structure comprises 390 residues: Pyruvate dehydrogenase E1 component subunit alpha, somatic form, mitochondrial (390 aa).

Residues 1 to 29 (MRKMLAAVSRVLSGASQKPASRVLVASRN) constitute a mitochondrion transit peptide. An N6-acetyllysine; alternate modification is found at Lys-63. Lys-63 bears the N6-succinyllysine; alternate mark. Pyruvate-binding residues include His-92, Tyr-118, Arg-119, Ala-157, Gly-165, Val-167, Asp-196, Gly-197, Ala-198, Asn-225, and Tyr-227. Thiamine diphosphate is bound by residues Tyr-118 and Arg-119. Positions 165, 167, 196, 197, 198, and 225 each coordinate thiamine diphosphate. Asp-196 is a Mg(2+) binding site. The Mg(2+) site is built by Asn-225 and Tyr-227. At Ser-232 the chain carries Phosphoserine; by PDK1. Lys-244 is modified (N6-acetyllysine; alternate). Lys-244 carries the post-translational modification N6-succinyllysine; alternate. Lys-277 is modified (N6-succinyllysine). His-292 provides a ligand contact to thiamine diphosphate. Ser-293 bears the Phosphoserine; by PDK1, PDK2, PDK3 and PDK4 mark. Ser-295 is subject to Phosphoserine. Ser-300 carries the post-translational modification Phosphoserine; by PDK1, PDK2, PDK3 and PDK4. Tyr-301 bears the Phosphotyrosine mark. An N6-acetyllysine; alternate modification is found at Lys-313. At Lys-313 the chain carries N6-succinyllysine; alternate. Residues Lys-321 and Lys-336 each carry the N6-acetyllysine modification. N6-succinyllysine is present on Lys-385.

Heterotetramer of two PDHA1 and two PDHB subunits. The heterotetramer interacts with DLAT, and is part of the multimeric pyruvate dehydrogenase complex that contains multiple copies of pyruvate dehydrogenase (E1), dihydrolipoamide acetyltransferase (DLAT, E2) and lipoamide dehydrogenase (DLD, E3). These subunits are bound to an inner core composed of about 48 DLAT and 12 PDHX molecules. Thiamine diphosphate is required as a cofactor. It depends on Mg(2+) as a cofactor. Post-translationally, phosphorylation at Ser-232, Ser-293 and Ser-300 by PDK family kinases inactivates the enzyme; for this phosphorylation at a single site is sufficient. Dephosphorylation at all three sites, i.e. at Ser-232, Ser-293 and Ser-300, is required for reactivation. In terms of processing, acetylation alters the phosphorylation pattern. Deacetylated by SIRT3. Ubiquitous.

It is found in the mitochondrion matrix. It carries out the reaction N(6)-[(R)-lipoyl]-L-lysyl-[protein] + pyruvate + H(+) = N(6)-[(R)-S(8)-acetyldihydrolipoyl]-L-lysyl-[protein] + CO2. Pyruvate dehydrogenase activity is inhibited by phosphorylation of PDHA1; it is reactivated by dephosphorylation. Its function is as follows. The pyruvate dehydrogenase complex catalyzes the overall conversion of pyruvate to acetyl-CoA and CO(2), and thereby links the glycolytic pathway to the tricarboxylic cycle. This chain is Pyruvate dehydrogenase E1 component subunit alpha, somatic form, mitochondrial (PDHA1), found in Homo sapiens (Human).